An 803-amino-acid chain; its full sequence is Protein translocase subunit SecA (803 aa).

ATP contacts are provided by residues Gln-100, 118–122 (GEGKT), and Asp-508.

This sequence belongs to the SecA family. In terms of assembly, monomer and homodimer. Part of the essential Sec protein translocation apparatus which comprises SecA, SecYEG and auxiliary proteins SecDF. Other proteins may also be involved.

The protein resides in the cell membrane. It is found in the cytoplasm. The enzyme catalyses ATP + H2O + cellular proteinSide 1 = ADP + phosphate + cellular proteinSide 2.. Its function is as follows. Part of the Sec protein translocase complex. Interacts with the SecYEG preprotein conducting channel. Has a central role in coupling the hydrolysis of ATP to the transfer of proteins into and across the cell membrane, serving as an ATP-driven molecular motor driving the stepwise translocation of polypeptide chains across the membrane. The chain is Protein translocase subunit SecA from Leuconostoc mesenteroides subsp. mesenteroides (strain ATCC 8293 / DSM 20343 / BCRC 11652 / CCM 1803 / JCM 6124 / NCDO 523 / NBRC 100496 / NCIMB 8023 / NCTC 12954 / NRRL B-1118 / 37Y).